A 311-amino-acid polypeptide reads, in one-letter code: Oxygen-dependent coproporphyrinogen-III oxidase (311 aa).

Serine 93 provides a ligand contact to substrate. 2 residues coordinate a divalent metal cation: histidine 97 and histidine 107. Histidine 107 functions as the Proton donor in the catalytic mechanism. Residue 109–111 (NVR) coordinates substrate. A divalent metal cation-binding residues include histidine 153 and histidine 184. An important for dimerization region spans residues 252–287 (YVEFNLVFDRGTLFGLQSGGRTESILMSLPPVVKWR). A substrate-binding site is contributed by 270-272 (GGR).

This sequence belongs to the aerobic coproporphyrinogen-III oxidase family. In terms of assembly, homodimer. A divalent metal cation is required as a cofactor.

The protein localises to the cytoplasm. It carries out the reaction coproporphyrinogen III + O2 + 2 H(+) = protoporphyrinogen IX + 2 CO2 + 2 H2O. It participates in porphyrin-containing compound metabolism; protoporphyrin-IX biosynthesis; protoporphyrinogen-IX from coproporphyrinogen-III (O2 route): step 1/1. Its function is as follows. Involved in the heme biosynthesis. Catalyzes the aerobic oxidative decarboxylation of propionate groups of rings A and B of coproporphyrinogen-III to yield the vinyl groups in protoporphyrinogen-IX. This Aromatoleum aromaticum (strain DSM 19018 / LMG 30748 / EbN1) (Azoarcus sp. (strain EbN1)) protein is Oxygen-dependent coproporphyrinogen-III oxidase.